Reading from the N-terminus, the 290-residue chain is ATP synthase gamma chain (290 aa).

Belongs to the ATPase gamma chain family. F-type ATPases have 2 components, CF(1) - the catalytic core - and CF(0) - the membrane proton channel. CF(1) has five subunits: alpha(3), beta(3), gamma(1), delta(1), epsilon(1). CF(0) has four main subunits: a, b, b' and c.

It localises to the cellular chromatophore membrane. Functionally, produces ATP from ADP in the presence of a proton gradient across the membrane. The gamma chain is believed to be important in regulating ATPase activity and the flow of protons through the CF(0) complex. This chain is ATP synthase gamma chain, found in Rhodobacter capsulatus (Rhodopseudomonas capsulata).